We begin with the raw amino-acid sequence, 286 residues long: Probable ketoamine kinase EAE_16955 (286 aa).

ATP is bound at residue 92-94 (EYL). Catalysis depends on Asp194, which acts as the Proton acceptor.

This sequence belongs to the fructosamine kinase family.

Its function is as follows. Ketoamine kinase that phosphorylates ketoamines on the third carbon of the sugar moiety to generate ketoamine 3-phosphate. The sequence is that of Probable ketoamine kinase EAE_16955 from Klebsiella aerogenes (strain ATCC 13048 / DSM 30053 / CCUG 1429 / JCM 1235 / KCTC 2190 / NBRC 13534 / NCIMB 10102 / NCTC 10006 / CDC 819-56) (Enterobacter aerogenes).